Reading from the N-terminus, the 438-residue chain is Plasmalemma vesicle-associated protein (438 aa).

The Cytoplasmic portion of the chain corresponds to 1-26; the sequence is MGLSMDRSPYSRTGDRDRGCWYYLRY. Residues 27 to 47 form a helical; Signal-anchor for type II membrane protein membrane-spanning segment; it reads FFLFVSLIQFLIILGLVLFMI. The Extracellular segment spans residues 48–438; it reads YGNVHATTES…LVNPAVPPSG (391 aa). Asparagine 82, asparagine 88, asparagine 112, and asparagine 150 each carry an N-linked (GlcNAc...) asparagine glycan. The stretch at 289–383 forms a coiled coil; that stretch reads AGIERVTREN…TEVDVRISAL (95 aa). A disordered region spans residues 393 to 438; that stretch reads PAIQPRLPGPPPNPPPIDPASLEEFKKRILESQRPPLVNPAVPPSG. Composition is skewed to pro residues over residues 399-410 and 429-438; these read LPGPPPNPPPID and LVNPAVPPSG.

As to quaternary structure, homodimer. As to expression, expressed in lung (alveolar endothelial and bronchial epithelial cells), kidney (endothelium of peritubular capillaries), spleen, liver, adrenal (endothelial cells of the zona reticularis of the cortex and chromaffin cells in the medulla), pancreas (islets of Langerhans), testis (germ cells, interstitial cells in neonatal testis and spermatids), ovary (stromal endothelial, thecal layer of developing follicles, luteal cells within the corpus luteum), intestine (endothelium of capillaries of the intestinal villi) and pituitary (pituicyte cells in the neural lobe) (at protein level). Expressed in lung, kidney, spleen, liver, adrenal, testis, heart, muscle, pituitary, thyroid and ovary.

Its subcellular location is the cell membrane. It localises to the membrane. It is found in the caveola. The protein localises to the cytoplasm. The protein resides in the perinuclear region. In terms of biological role, endothelial cell-specific membrane protein involved in the formation of the diaphragms that bridge endothelial fenestrae. It is also required for the formation of stomata of caveolae and transendothelial channels. Functions in microvascular permeability, endothelial fenestrae contributing to the passage of water and solutes and regulating transcellular versus paracellular flow in different organs. Plays a specific role in embryonic development. The chain is Plasmalemma vesicle-associated protein (Plvap) from Rattus norvegicus (Rat).